Here is a 402-residue protein sequence, read N- to C-terminus: Serine/threonine transporter SstT (402 aa).

A run of 8 helical transmembrane segments spans residues 17–37 (IAIG…ITVI), 44–64 (FVGG…ANAL), 78–98 (IIVL…ISHY), 138–158 (ALSQ…GFAM), 179–199 (IVRW…FDTI), 212–232 (VLIL…NPII), 295–315 (MAGA…TLGI), and 336–356 (ASGI…LFGI).

The protein belongs to the dicarboxylate/amino acid:cation symporter (DAACS) (TC 2.A.23) family.

It is found in the cell membrane. It catalyses the reaction L-serine(in) + Na(+)(in) = L-serine(out) + Na(+)(out). It carries out the reaction L-threonine(in) + Na(+)(in) = L-threonine(out) + Na(+)(out). In terms of biological role, involved in the import of serine and threonine into the cell, with the concomitant import of sodium (symport system). The polypeptide is Serine/threonine transporter SstT (Streptococcus thermophilus (strain ATCC BAA-250 / LMG 18311)).